The chain runs to 251 residues: Pyrroloquinoline-quinone synthase (251 aa).

This sequence belongs to the PqqC family.

The catalysed reaction is 6-(2-amino-2-carboxyethyl)-7,8-dioxo-1,2,3,4,7,8-hexahydroquinoline-2,4-dicarboxylate + 3 O2 = pyrroloquinoline quinone + 2 H2O2 + 2 H2O + H(+). The protein operates within cofactor biosynthesis; pyrroloquinoline quinone biosynthesis. Ring cyclization and eight-electron oxidation of 3a-(2-amino-2-carboxyethyl)-4,5-dioxo-4,5,6,7,8,9-hexahydroquinoline-7,9-dicarboxylic-acid to PQQ. The polypeptide is Pyrroloquinoline-quinone synthase (Pseudomonas putida (strain GB-1)).